The following is a 632-amino-acid chain: MSAADANQLQESLEKLNLDSAPAAAEEEAVAAESAPAGEEGADSANVAESTASLYVGELNTSVNEATLFEIFSPIGQVSSIRVCRDAVSKKSLGYAYVNYHKMEDGEKAIEELNYSPIEGRPCRIMWSQRDPSARRSGDGNIFIKNLHPAIDNKALHDTFSTFGKILSCKVATDDMGQSKCFGFVHYETAEAAEAAIENVNGMLLNDREVFVGKHISKKDRESKFEEIKANFTNIYVKNIDLEYSEEDLKKLFTPYGAITSIYLEKDAEGKSKGFGFVNYEGHEAAVKAVEELNDKEINGQKIYVGRAQKKRERMEELKKQYENTRLEKLSKYQGVNLFIKNLDDTIDSEKLEEEFKPFGTITSARVMVDETGKSKGFGFVCFSSPEEATKAITEMNQRMFFGKPLYVALAQRKDVRRSQLEQQIQARNQMRMQNAAATGGIPGQFIPPMFYGQQGFFPPNGRGNAPFPGPNPQMIMRRGQPFGGPEQWPRPGPNGQPVPVYGIPPQAYSDFNGQNIRQQRGYYPNRNQNKGRQQRDLAAIIASAPPDQQKRILGEELYPKIVATGKAQEPEAAGKITGMMLDLDNQEILALLEDDELFTNHFEDALTAFEEYKNSEAAAPVAPAAPAEPQA.

A compositionally biased stretch (polar residues) spans 1–11; sequence MSAADANQLQE. Residues 1 to 43 are disordered; the sequence is MSAADANQLQESLEKLNLDSAPAAAEEEAVAAESAPAGEEGAD. The span at 31 to 43 shows a compositional bias: low complexity; it reads AAESAPAGEEGAD. 4 consecutive RRM domains span residues 52–130, 140–217, 233–310, and 336–413; these read ASLY…WSQR, GNIF…KHIS, TNIY…RAQK, and VNLF…LAQR. Residues 534–615 enclose the PABC domain; sequence QQRDLAAIIA…ALTAFEEYKN (82 aa).

It belongs to the polyadenylate-binding protein type-1 family.

It is found in the cytoplasm. Its subcellular location is the nucleus. Its function is as follows. Binds the poly(A) tail of mRNA. Appears to be an important mediator of the multiple roles of the poly(A) tail in mRNA biogenesis, stability and translation. In the nucleus, involved in both mRNA cleavage and polyadenylation. Is also required for efficient mRNA export to the cytoplasm. Acts in concert with a poly(A)-specific nuclease (PAN) to affect poly(A) tail shortening, which may occur concomitantly with either nucleocytoplasmic mRNA transport or translational initiation. In the cytoplasm, stimulates translation initiation and regulates mRNA decay through translation termination-coupled poly(A) shortening, probably mediated by PAN. The chain is Polyadenylate-binding protein, cytoplasmic and nuclear (PAB1) from Scheffersomyces stipitis (strain ATCC 58785 / CBS 6054 / NBRC 10063 / NRRL Y-11545) (Yeast).